Consider the following 350-residue polypeptide: Protein FAM118B (350 aa).

Ala2 is subject to N-acetylalanine. Ser9 bears the Phosphoserine mark.

The protein belongs to the FAM118 family.

It is found in the nucleus. The protein localises to the cajal body. Functionally, may play a role in Cajal bodies formation. This is Protein FAM118B (FAM118B) from Macaca fascicularis (Crab-eating macaque).